The primary structure comprises 542 residues: 2,3-bisphosphoglycerate-independent phosphoglycerate mutase (542 aa).

Positions 24 and 74 each coordinate Mn(2+). Ser74 serves as the catalytic Phosphoserine intermediate. Substrate contacts are provided by residues His135, 165-166 (RD), Arg197, Arg203, 268-271 (RPDR), and Lys341. 5 residues coordinate Mn(2+): Asp408, His412, Asp449, His450, and His467.

The protein belongs to the BPG-independent phosphoglycerate mutase family. Monomer. It depends on Mn(2+) as a cofactor.

It catalyses the reaction (2R)-2-phosphoglycerate = (2R)-3-phosphoglycerate. The protein operates within carbohydrate degradation; glycolysis; pyruvate from D-glyceraldehyde 3-phosphate: step 3/5. Catalyzes the interconversion of 2-phosphoglycerate and 3-phosphoglycerate. The polypeptide is 2,3-bisphosphoglycerate-independent phosphoglycerate mutase (Prochlorococcus marinus (strain NATL1A)).